Consider the following 196-residue polypeptide: Serine recombinase PinR (196 aa).

One can recognise a Resolvase/invertase-type recombinase catalytic domain in the interval 3–143; sequence RIFAYCRIST…SGIVRARGAG (141 aa). Serine 11 acts as the O-(5'-phospho-DNA)-serine intermediate in catalysis.

Belongs to the site-specific recombinase resolvase family.

This Escherichia coli (strain K12) protein is Serine recombinase PinR (pinR).